The chain runs to 275 residues: Myb/SANT-like DNA-binding domain-containing protein 3 (275 aa).

The Myb-like domain maps to F13 to K78. 2 positions are modified to phosphoserine: S96 and S98. Residue K154 forms a Glycyl lysine isopeptide (Lys-Gly) (interchain with G-Cter in SUMO2) linkage. Residues Q211 to K247 adopt a coiled-coil conformation. A Phosphoserine modification is found at S274.

It belongs to the MSANTD3 family.

This chain is Myb/SANT-like DNA-binding domain-containing protein 3 (MSANTD3), found in Bos taurus (Bovine).